The chain runs to 375 residues: Putative actin-26 (375 aa).

This sequence belongs to the actin family.

Its subcellular location is the cytoplasm. The protein localises to the cytoskeleton. The catalysed reaction is ATP + H2O = ADP + phosphate + H(+). In terms of biological role, actins are highly conserved proteins that are involved in various types of cell motility and are ubiquitously expressed in all eukaryotic cells. Multiple isoforms are involved in various cellular functions such as cytoskeleton structure, cell mobility, chromosome movement and muscle contraction. The polypeptide is Putative actin-26 (act26) (Dictyostelium discoideum (Social amoeba)).